We begin with the raw amino-acid sequence, 176 residues long: MNSASDTHFSLFGLPEHFEVDDGALNAAYRTVQSRAHPDRHAHASDAERRVAMQWATRANEAYQTLRDPLKRATYLLHLRGVDVQAENNTAMPPAFLMQQLEWRESLADAKAAGDLDALDDLLAMLRGEKRARYQTLAGLLNGGGHDAAAADAVRQLMFIEKIERDTAEAIDRLDD.

Residues 7–79 (THFSLFGLPE…LKRATYLLHL (73 aa)) enclose the J domain.

This sequence belongs to the HscB family. Interacts with HscA and stimulates its ATPase activity.

Functionally, co-chaperone involved in the maturation of iron-sulfur cluster-containing proteins. Seems to help targeting proteins to be folded toward HscA. This is Co-chaperone protein HscB homolog from Ralstonia nicotianae (strain ATCC BAA-1114 / GMI1000) (Ralstonia solanacearum).